We begin with the raw amino-acid sequence, 442 residues long: HTH-type transcriptional regulator NorG (442 aa).

The region spanning 2–46 (KIPSQRQLAIQYNVNRVTIIKSIELLEAEGFIYTKVGSGTYVNDY) is the HTH gntR-type domain. Positions 6–25 (QRQLAIQYNVNRVTIIKSIE) form a DNA-binding region, H-T-H motif. Lysine 288 is subject to N6-(pyridoxal phosphate)lysine.

In the C-terminal section; belongs to the class-I pyridoxal-phosphate-dependent aminotransferase family. It depends on pyridoxal 5'-phosphate as a cofactor.

In terms of biological role, positively regulates the expression of the NorB efflux pump and negatively regulates the expression of the AbcA efflux pump. Binds specifically to the promoters of norA, norB and norC and abcA genes. Could also have an aminotransferase activity. In Staphylococcus aureus (strain bovine RF122 / ET3-1), this protein is HTH-type transcriptional regulator NorG (norG).